An 876-amino-acid chain; its full sequence is Neurotrypsin (876 aa).

An N-terminal signal peptide occupies residues 1 to 20; that stretch reads MTLARFVLALMLGALPEVVG. An N-linked (GlcNAc...) asparagine glycan is attached at Asn-26. The interval 29 to 89 is disordered; it reads LHHSHRHSPP…ALQAGHTPRP (61 aa). Residues 43–54 are compositionally biased toward low complexity; sequence YPSYYLPTQQRP. Over residues 57–72 the composition is skewed to pro residues; that stretch reads TRPPPPLPRFPRPPRA. The 73-residue stretch at 94–166 folds into the Kringle domain; sequence CPAGEPWVSV…GKVDWGYCDC (73 aa). Disulfide bonds link Cys-94/Cys-166, Cys-110/Cys-150, Cys-139/Cys-164, Cys-196/Cys-260, Cys-209/Cys-270, Cys-240/Cys-250, Cys-306/Cys-370, Cys-319/Cys-380, Cys-350/Cys-360, Cys-413/Cys-476, Cys-426/Cys-486, Cys-456/Cys-466, Cys-526/Cys-590, Cys-539/Cys-600, Cys-570/Cys-580, Cys-620/Cys-751, Cys-662/Cys-678, Cys-766/Cys-832, Cys-795/Cys-809, and Cys-822/Cys-851. 4 consecutive SRCR domains span residues 171-272, 281-382, 388-488, and 501-602; these read VRLR…TCSF, IRLA…SCTP, IRLA…ACYP, and VRLM…ICDY. The interval 620–631 is zymogen activation region; sequence CGLRLLHRRQKR. The Peptidase S1 domain maps to 632 to 875; it reads IIGGKNSLRG…FVPWIKSVTK (244 aa). The Charge relay system role is filled by His-677. Residue Asn-684 is glycosylated (N-linked (GlcNAc...) asparagine). Catalysis depends on Asp-727, which acts as the Charge relay system. The active-site Charge relay system is the Ser-826.

Belongs to the peptidase S1 family.

It is found in the secreted. Plays a role in neuronal plasticity and the proteolytic action may subserve structural reorganizations associated with learning and memory operations. The sequence is that of Neurotrypsin (PRSS12) from Gorilla gorilla gorilla (Western lowland gorilla).